We begin with the raw amino-acid sequence, 333 residues long: Beta-ketoacyl-[acyl-carrier-protein] synthase III (333 aa).

Catalysis depends on residues Cys-116 and His-258. The tract at residues 259–263 (QANQR) is ACP-binding. Asn-288 is a catalytic residue.

This sequence belongs to the thiolase-like superfamily. FabH family. As to quaternary structure, homodimer.

It is found in the cytoplasm. The catalysed reaction is malonyl-[ACP] + acetyl-CoA + H(+) = 3-oxobutanoyl-[ACP] + CO2 + CoA. It functions in the pathway lipid metabolism; fatty acid biosynthesis. Catalyzes the condensation reaction of fatty acid synthesis by the addition to an acyl acceptor of two carbons from malonyl-ACP. Catalyzes the first condensation reaction which initiates fatty acid synthesis and may therefore play a role in governing the total rate of fatty acid production. Possesses both acetoacetyl-ACP synthase and acetyl transacylase activities. Its substrate specificity determines the biosynthesis of branched-chain and/or straight-chain of fatty acids. The polypeptide is Beta-ketoacyl-[acyl-carrier-protein] synthase III (Microcystis aeruginosa (strain NIES-843 / IAM M-2473)).